Reading from the N-terminus, the 336-residue chain is Aspartate--ammonia ligase (336 aa).

The protein belongs to the class-II aminoacyl-tRNA synthetase family. AsnA subfamily.

Its subcellular location is the cytoplasm. It carries out the reaction L-aspartate + NH4(+) + ATP = L-asparagine + AMP + diphosphate + H(+). The protein operates within amino-acid biosynthesis; L-asparagine biosynthesis; L-asparagine from L-aspartate (ammonia route): step 1/1. The chain is Aspartate--ammonia ligase from Clostridium perfringens (strain 13 / Type A).